The chain runs to 278 residues: Large ribosomal subunit protein uL24m (278 aa).

The region spanning 109–142 is the KOW domain; it reads FFPGDLVQVMVGKDKGRQGLVLTTSRDSSDVIVD.

The protein belongs to the universal ribosomal protein uL24 family.

It localises to the mitochondrion. This chain is Large ribosomal subunit protein uL24m (mrpl-24), found in Caenorhabditis elegans.